A 380-amino-acid chain; its full sequence is Palmitoyltransferase ZDHHC20 (380 aa).

The Cytoplasmic portion of the chain corresponds to 1–14 (MAPWTLWRCCQRVV). A helical transmembrane segment spans residues 15–35 (GWVPVLFITFVVVWSYYAYVV). At 36–53 (ELCVSTISRTGEKGKTVV) the chain is on the lumenal side. A helical transmembrane segment spans residues 54-74 (YLVAFHLFFVMFVWSYWMTIF). Topologically, residues 75 to 169 (TSPASPSKEF…NNCVGFTNYK (95 aa)) are cytoplasmic. The DHHC domain maps to 126–176 (RYCEKCQLIKPDRAHHCSACDRCVLKMDHHCPWVNNCVGFTNYKFFMLFLL). The Zn(2+) site is built by Cys-128 and Cys-131. Residues Lys-135 and 140 to 143 (HHCS) contribute to the substrate site. Zn(2+)-binding residues include His-141, Cys-142, Cys-145, Cys-148, and His-155. The active-site S-palmitoyl cysteine intermediate is Cys-156. Cys-162 is a Zn(2+) binding site. The helical transmembrane segment at 170–190 (FFMLFLLYSLLYCLFVAATVL) threads the bilayer. The Lumenal portion of the chain corresponds to 191–222 (EYFIKFWTLCRRKSTENCPKNEPTVLNFPSAK). A helical membrane pass occupies residues 223–246 (FHVLFLFFVSAMFFVSVLSLFSYH). Over 247–380 (CWLVGKNRTT…NNHVTVEIEN (134 aa)) the chain is Cytoplasmic. Residues Ser-320, Ser-345, and Ser-354 each carry the phosphoserine modification.

The protein belongs to the DHHC palmitoyltransferase family. In terms of processing, autopalmitoylated (in vitro). As to expression, highest levels in lung.

It is found in the golgi apparatus membrane. It localises to the cell membrane. The protein resides in the cytoplasm. The protein localises to the perinuclear region. Its subcellular location is the endoplasmic reticulum membrane. It is found in the endoplasmic reticulum-Golgi intermediate compartment membrane. It catalyses the reaction L-cysteinyl-[protein] + hexadecanoyl-CoA = S-hexadecanoyl-L-cysteinyl-[protein] + CoA. The catalysed reaction is L-cysteinyl-[protein] + tetradecanoyl-CoA = S-tetradecanoyl-L-cysteinyl-[protein] + CoA. The enzyme catalyses L-cysteinyl-[protein] + octadecanoyl-CoA = S-octadecanoyl-L-cysteinyl-[protein] + CoA. Palmitoyltransferase that could catalyze the addition of palmitate onto various protein substrates. Catalyzes palmitoylation of Cys residues in the cytoplasmic C-terminus of EGFR, and modulates the duration of EGFR signaling by modulating palmitoylation-dependent EGFR internalization and degradation. Has a preference for acyl-CoA with C16 fatty acid chains. Can also utilize acyl-CoA with C14 and C18 fatty acid chains. May palmitoylate CALHM1 subunit of gustatory voltage-gated ion channels and modulate channel gating and kinetics. This chain is Palmitoyltransferase ZDHHC20, found in Mus musculus (Mouse).